The following is a 227-amino-acid chain: Heptaprenylglyceryl phosphate synthase (227 aa).

Residue lysine 13 participates in sn-glycerol 1-phosphate binding. Residues aspartate 15 and threonine 41 each contribute to the Mg(2+) site. Sn-glycerol 1-phosphate is bound by residues 159–164, glycine 189, and 209–210; these read YLEYSG and GN.

It belongs to the GGGP/HepGP synthase family. Group I subfamily. As to quaternary structure, homodimer. Mg(2+) is required as a cofactor.

The enzyme catalyses sn-glycerol 1-phosphate + all-trans-heptaprenyl diphosphate = 3-heptaprenyl-sn-glycero-1-phosphate + diphosphate. The protein operates within membrane lipid metabolism; glycerophospholipid metabolism. In terms of biological role, prenyltransferase that catalyzes in vivo the transfer of the heptaprenyl moiety of heptaprenyl pyrophosphate (HepPP; 35 carbon atoms) to the C3 hydroxyl of sn-glycerol-1-phosphate (G1P), producing heptaprenylglyceryl phosphate (HepGP). This reaction is an ether-bond-formation step in the biosynthesis of archaea-type G1P-based membrane lipids found in Bacillales. In Exiguobacterium sibiricum (strain DSM 17290 / CCUG 55495 / CIP 109462 / JCM 13490 / 255-15), this protein is Heptaprenylglyceryl phosphate synthase.